Reading from the N-terminus, the 374-residue chain is Probable aminopeptidase YDR415C (374 aa).

Positions 1-18 (MRIQSLFVLFNVAIIAWS) are cleaved as a signal peptide. Residues His-177, Asp-196, Glu-235, Asp-262, and His-340 each contribute to the Zn(2+) site.

This sequence belongs to the peptidase M28 family. M28E subfamily. It depends on Zn(2+) as a cofactor.

The chain is Probable aminopeptidase YDR415C from Saccharomyces cerevisiae (strain ATCC 204508 / S288c) (Baker's yeast).